The following is a 196-amino-acid chain: Protein GrpE (196 aa).

Positions 1–40 (MSSKEQKTPEGQAPEEIIMDQHEEVEAVEPNDSAEQVDPR) are disordered.

It belongs to the GrpE family. As to quaternary structure, homodimer.

The protein localises to the cytoplasm. Participates actively in the response to hyperosmotic and heat shock by preventing the aggregation of stress-denatured proteins, in association with DnaK and GrpE. It is the nucleotide exchange factor for DnaK and may function as a thermosensor. Unfolded proteins bind initially to DnaJ; upon interaction with the DnaJ-bound protein, DnaK hydrolyzes its bound ATP, resulting in the formation of a stable complex. GrpE releases ADP from DnaK; ATP binding to DnaK triggers the release of the substrate protein, thus completing the reaction cycle. Several rounds of ATP-dependent interactions between DnaJ, DnaK and GrpE are required for fully efficient folding. This Salmonella gallinarum (strain 287/91 / NCTC 13346) protein is Protein GrpE.